A 120-amino-acid chain; its full sequence is Small ribosomal subunit protein uS13 (120 aa).

Residues H92–K120 are disordered. Over residues A107–K120 the composition is skewed to basic residues.

It belongs to the universal ribosomal protein uS13 family. As to quaternary structure, part of the 30S ribosomal subunit. Forms a loose heterodimer with protein S19. Forms two bridges to the 50S subunit in the 70S ribosome.

Functionally, located at the top of the head of the 30S subunit, it contacts several helices of the 16S rRNA. In the 70S ribosome it contacts the 23S rRNA (bridge B1a) and protein L5 of the 50S subunit (bridge B1b), connecting the 2 subunits; these bridges are implicated in subunit movement. Contacts the tRNAs in the A and P-sites. This chain is Small ribosomal subunit protein uS13, found in Helicobacter pylori (strain J99 / ATCC 700824) (Campylobacter pylori J99).